Here is a 644-residue protein sequence, read N- to C-terminus: Macrolide export ATP-binding/permease protein MacB (644 aa).

In terms of domain architecture, ABC transporter spans 7–245 (IELQDITRSF…IPETDQNGRR (239 aa)). 43–50 (GPSGSGKS) is a binding site for ATP. The next 4 membrane-spanning stretches (helical) occupy residues 271-291 (ALTL…LAIG), 526-546 (IAAI…LVSV), 570-590 (FLTE…VIGI), and 607-627 (LLPM…FGFL).

Belongs to the ABC transporter superfamily. Macrolide exporter (TC 3.A.1.122) family. In terms of assembly, homodimer. Part of the tripartite efflux system MacAB-TolC, which is composed of an inner membrane transporter, MacB, a periplasmic membrane fusion protein, MacA, and an outer membrane component, TolC. The complex forms a large protein conduit and can translocate molecules across both the inner and outer membranes. Interacts with MacA.

It is found in the cell inner membrane. Functionally, part of the tripartite efflux system MacAB-TolC. MacB is a non-canonical ABC transporter that contains transmembrane domains (TMD), which form a pore in the inner membrane, and an ATP-binding domain (NBD), which is responsible for energy generation. Confers resistance against macrolides. The chain is Macrolide export ATP-binding/permease protein MacB from Marinobacter nauticus (strain ATCC 700491 / DSM 11845 / VT8) (Marinobacter aquaeolei).